The following is a 327-amino-acid chain: Probable cell division protein WhiA (327 aa).

Positions 275-308 (SLEELGQLADPPMTKDAVAGRIRRLLSMADRRAR) form a DNA-binding region, H-T-H motif.

Belongs to the WhiA family.

Involved in cell division and chromosome segregation. This chain is Probable cell division protein WhiA, found in Nocardia farcinica (strain IFM 10152).